Consider the following 140-residue polypeptide: ATP synthase epsilon chain (140 aa).

Belongs to the ATPase epsilon chain family. F-type ATPases have 2 components, CF(1) - the catalytic core - and CF(0) - the membrane proton channel. CF(1) has five subunits: alpha(3), beta(3), gamma(1), delta(1), epsilon(1). CF(0) has three main subunits: a, b and c.

It is found in the cell membrane. In terms of biological role, produces ATP from ADP in the presence of a proton gradient across the membrane. In Baumannia cicadellinicola subsp. Homalodisca coagulata, this protein is ATP synthase epsilon chain.